Consider the following 389-residue polypeptide: Chalcone synthase 5 (389 aa).

The active site involves C164.

The protein belongs to the thiolase-like superfamily. Chalcone/stilbene synthases family.

It carries out the reaction (E)-4-coumaroyl-CoA + 3 malonyl-CoA + 3 H(+) = 2',4,4',6'-tetrahydroxychalcone + 3 CO2 + 4 CoA. It functions in the pathway secondary metabolite biosynthesis; flavonoid biosynthesis. Its function is as follows. The primary product of this enzyme is 4,2',4',6'-tetrahydroxychalcone (also termed naringenin-chalcone or chalcone) which can under specific conditions spontaneously isomerize into naringenin. The chain is Chalcone synthase 5 (CHS5) from Trifolium subterraneum (Subterranean clover).